The chain runs to 317 residues: Tyrosine--tRNA ligase (317 aa).

Tyr-33 serves as a coordination point for L-tyrosine. Positions 38–46 (PSGKIHMGH) match the 'HIGH' region motif. L-tyrosine contacts are provided by Tyr-155, Gln-159, Asp-162, and Gln-177. Positions 211 to 215 (KMASS) match the 'KMSKS' region motif. Ser-214 serves as a coordination point for ATP.

The protein belongs to the class-I aminoacyl-tRNA synthetase family. TyrS type 3 subfamily. Homodimer.

The protein resides in the cytoplasm. The enzyme catalyses tRNA(Tyr) + L-tyrosine + ATP = L-tyrosyl-tRNA(Tyr) + AMP + diphosphate + H(+). In terms of biological role, catalyzes the attachment of tyrosine to tRNA(Tyr) in a two-step reaction: tyrosine is first activated by ATP to form Tyr-AMP and then transferred to the acceptor end of tRNA(Tyr). This is Tyrosine--tRNA ligase from Methanosarcina mazei (strain ATCC BAA-159 / DSM 3647 / Goe1 / Go1 / JCM 11833 / OCM 88) (Methanosarcina frisia).